An 875-amino-acid chain; its full sequence is Neurotrypsin (875 aa).

The N-terminal stretch at 1-20 (MTLARFVLALVLGALPEVVG) is a signal peptide. Asparagine 26 carries an N-linked (GlcNAc...) asparagine glycan. The disordered stretch occupies residues 30–87 (HHRHRHSPPPGPQYPYYLPTHQRPPRTRPPPPLPRFPRPPRALPAQRPHALQAGHTPR). The span at 56–71 (TRPPPPLPRFPRPPRA) shows a compositional bias: pro residues. Residues 93–165 (CPAGELWVSV…GKVDWGYCDC (73 aa)) form the Kringle domain. 20 disulfide bridges follow: cysteine 93–cysteine 165, cysteine 109–cysteine 149, cysteine 138–cysteine 163, cysteine 195–cysteine 259, cysteine 208–cysteine 269, cysteine 239–cysteine 249, cysteine 305–cysteine 369, cysteine 318–cysteine 379, cysteine 349–cysteine 359, cysteine 412–cysteine 475, cysteine 425–cysteine 485, cysteine 455–cysteine 465, cysteine 525–cysteine 589, cysteine 538–cysteine 599, cysteine 569–cysteine 579, cysteine 619–cysteine 750, cysteine 661–cysteine 677, cysteine 765–cysteine 831, cysteine 794–cysteine 808, and cysteine 821–cysteine 850. SRCR domains follow at residues 170–271 (VRLR…TCSF), 280–381 (IRLV…SCTP), 387–487 (IRLA…ACYP), and 500–601 (VRLM…ICDY). The tract at residues 619 to 630 (CGLRLLHRRQKR) is zymogen activation region. In terms of domain architecture, Peptidase S1 spans 631 to 874 (IIGGKNSLRG…FVPWIKSVTK (244 aa)). The Charge relay system role is filled by histidine 676. Asparagine 683 is a glycosylation site (N-linked (GlcNAc...) asparagine). Catalysis depends on aspartate 726, which acts as the Charge relay system. Catalysis depends on serine 825, which acts as the Charge relay system.

The protein belongs to the peptidase S1 family.

The protein localises to the secreted. In terms of biological role, plays a role in neuronal plasticity and the proteolytic action may subserve structural reorganizations associated with learning and memory operations. The chain is Neurotrypsin (PRSS12) from Macaca mulatta (Rhesus macaque).